A 378-amino-acid polypeptide reads, in one-letter code: Quinolinate synthase (378 aa).

Residues histidine 59 and serine 80 each coordinate iminosuccinate. Residue cysteine 125 coordinates [4Fe-4S] cluster. Iminosuccinate-binding positions include 151–153 (YAN) and serine 168. Cysteine 212 is a [4Fe-4S] cluster binding site. Iminosuccinate contacts are provided by residues 238-240 (HPE) and threonine 255. Cysteine 309 is a binding site for [4Fe-4S] cluster.

Belongs to the quinolinate synthase family. Type 1 subfamily. It depends on [4Fe-4S] cluster as a cofactor.

It is found in the cytoplasm. It catalyses the reaction iminosuccinate + dihydroxyacetone phosphate = quinolinate + phosphate + 2 H2O + H(+). Its pathway is cofactor biosynthesis; NAD(+) biosynthesis; quinolinate from iminoaspartate: step 1/1. Its function is as follows. Catalyzes the condensation of iminoaspartate with dihydroxyacetone phosphate to form quinolinate. The chain is Quinolinate synthase from Burkholderia orbicola (strain MC0-3).